The primary structure comprises 103 residues: MVKHSKGYRTRTRKLLTKNVRERGAVPRLSLLMEEFKEGDYVVIKINPSVHKGMPHRRYHGKVGVIQGKRGKAYIVRVTLGDKEKVIIVRPEHLAKFNGIKNG.

This sequence belongs to the eukaryotic ribosomal protein eL21 family.

This chain is Large ribosomal subunit protein eL21, found in Sulfurisphaera tokodaii (strain DSM 16993 / JCM 10545 / NBRC 100140 / 7) (Sulfolobus tokodaii).